The sequence spans 518 residues: Putative succinate-semialdehyde dehydrogenase [NADP(+)] 2 (518 aa).

Residues 157–158 (WN), 181–184 (KPDS), and 232–233 (GS) each bind NADP(+). Residue E254 is the Proton acceptor of the active site. Position 255 (L255) interacts with NADP(+). The active-site Nucleophile is the C288. Residue E386 participates in NADP(+) binding.

This sequence belongs to the aldehyde dehydrogenase family.

The enzyme catalyses succinate semialdehyde + NADP(+) + H2O = succinate + NADPH + 2 H(+). Its function is as follows. Catalyzes the NADP(+)-dependent oxidation of succinate semialdehyde to succinate. Although it has succinate semialdehyde dehydrogenase activity, is likely to act physiologically on a different aldehyde(s). This is Putative succinate-semialdehyde dehydrogenase [NADP(+)] 2 (gabD2) from Mycobacterium ulcerans (strain Agy99).